We begin with the raw amino-acid sequence, 619 residues long: ATP-dependent zinc metalloprotease FtsH 1 (619 aa).

Residues 1–8 (MADEKRPA) lie on the Cytoplasmic side of the membrane. The helical transmembrane segment at 9–29 (SRAWLGYLLIAVGILVLSGIV) threads the bilayer. The Periplasmic portion of the chain corresponds to 30–108 (RSRGRPLVPY…RIEAKSPQTS (79 aa)). A helical transmembrane segment spans residues 109–129 (VWMQVAIWMLPLVLINAAFFM). Residues 130-619 (MLRRAGQGAG…KIAVGPPSAA (490 aa)) lie on the Cytoplasmic side of the membrane. 203 to 210 (GPPGTGKT) provides a ligand contact to ATP. His426 serves as a coordination point for Zn(2+). Glu427 is a catalytic residue. Zn(2+) contacts are provided by His430 and Asp503.

This sequence in the central section; belongs to the AAA ATPase family. The protein in the C-terminal section; belongs to the peptidase M41 family. Homohexamer. The cofactor is Zn(2+).

The protein resides in the cell inner membrane. Acts as a processive, ATP-dependent zinc metallopeptidase for both cytoplasmic and membrane proteins. Plays a role in the quality control of integral membrane proteins. This chain is ATP-dependent zinc metalloprotease FtsH 1, found in Sorangium cellulosum (strain So ce56) (Polyangium cellulosum (strain So ce56)).